The chain runs to 397 residues: Mannonate dehydratase (397 aa).

This sequence belongs to the mannonate dehydratase family. Fe(2+) serves as cofactor. The cofactor is Mn(2+).

The catalysed reaction is D-mannonate = 2-dehydro-3-deoxy-D-gluconate + H2O. The protein operates within carbohydrate metabolism; pentose and glucuronate interconversion. Catalyzes the dehydration of D-mannonate. The chain is Mannonate dehydratase from Saccharophagus degradans (strain 2-40 / ATCC 43961 / DSM 17024).